A 197-amino-acid chain; its full sequence is uncharacterized protein (197 aa).

Residues 11–31 (ICGFSLVALTIAGIVGGVYLV) traverse the membrane as a helical segment.

The protein resides in the membrane. This is an uncharacterized protein from Mycoplasma pneumoniae (strain ATCC 29342 / M129 / Subtype 1) (Mycoplasmoides pneumoniae).